Reading from the N-terminus, the 275-residue chain is Elongation factor Ts (275 aa).

The involved in Mg(2+) ion dislocation from EF-Tu stretch occupies residues 76 to 79 (TDFV).

Belongs to the EF-Ts family.

The protein resides in the cytoplasm. Functionally, associates with the EF-Tu.GDP complex and induces the exchange of GDP to GTP. It remains bound to the aminoacyl-tRNA.EF-Tu.GTP complex up to the GTP hydrolysis stage on the ribosome. The chain is Elongation factor Ts from Rhodococcus erythropolis (strain PR4 / NBRC 100887).